A 341-amino-acid chain; its full sequence is Ribosomal RNA small subunit methyltransferase C (341 aa).

This sequence belongs to the methyltransferase superfamily. RsmC family. Monomer.

It localises to the cytoplasm. It carries out the reaction guanosine(1207) in 16S rRNA + S-adenosyl-L-methionine = N(2)-methylguanosine(1207) in 16S rRNA + S-adenosyl-L-homocysteine + H(+). Functionally, specifically methylates the guanine in position 1207 of 16S rRNA in the 30S particle. This is Ribosomal RNA small subunit methyltransferase C from Shewanella pealeana (strain ATCC 700345 / ANG-SQ1).